The primary structure comprises 94 residues: Small ribosomal subunit protein uS17 (94 aa).

The protein belongs to the universal ribosomal protein uS17 family. Part of the 30S ribosomal subunit.

Its function is as follows. One of the primary rRNA binding proteins, it binds specifically to the 5'-end of 16S ribosomal RNA. In Streptomyces avermitilis (strain ATCC 31267 / DSM 46492 / JCM 5070 / NBRC 14893 / NCIMB 12804 / NRRL 8165 / MA-4680), this protein is Small ribosomal subunit protein uS17.